A 315-amino-acid polypeptide reads, in one-letter code: Porphobilinogen deaminase (315 aa).

C234 carries the S-(dipyrrolylmethanemethyl)cysteine modification.

Belongs to the HMBS family. Monomer. Dipyrromethane serves as cofactor.

It carries out the reaction 4 porphobilinogen + H2O = hydroxymethylbilane + 4 NH4(+). Its pathway is porphyrin-containing compound metabolism; protoporphyrin-IX biosynthesis; coproporphyrinogen-III from 5-aminolevulinate: step 2/4. Tetrapolymerization of the monopyrrole PBG into the hydroxymethylbilane pre-uroporphyrinogen in several discrete steps. This is Porphobilinogen deaminase from Mycolicibacterium paratuberculosis (strain ATCC BAA-968 / K-10) (Mycobacterium paratuberculosis).